The primary structure comprises 583 residues: MSVVDKNYHKKTYHKYDHNKWVLIIYVKSVSHETNIDKFFYENTIDSLDSVINISSICLYTLNDQLSKILVDIQPKCKIPINLCVDSDNDILNTMKLHLDNNLSIIYFTNNTGFSVQQKQCHSLDCLSAYTTCIYDDLYSKVLNKFGLSKLITFDTLVVPNNNDSRKFIDNCIYFCRKLIGTDNEFKINLSLTITDSRMGYIVKDLETDLEIPNNNFVRNIVDKSFRQYLTEQFCSVKNNFKKCELPWKDDNFIYYPYLDMNVFPCDESVQNISYTSCNTNGFITNETNPFGKLFTRFNNPYEGVYLKKPQNNIQIPKHLHHIWIDEEPSINYINLWKTILVEPWKYTIWDNNSVLDLIKDTHWDQMYNCAKQSRQKQLIAMLSILEKYGGITINAYNIPLKSLDSLTIGNKFFVSFLAEDTGTSLSYRIIGSLPGGLGKNMIDPNISRKPYEGINNFFRSVNYNKTNDFVIPEIFDKLKSLLHVSVLNSNNTHNNFSKEIDYFLLSLSGQNIFIYPSYYFNANISTLPKRLSNKIIMINLQKYPDKKPIRIKTEVHRPYVVTKEAIADQLNENPKDKLKNIK.

This is an uncharacterized protein from Acanthamoeba polyphaga (Amoeba).